A 179-amino-acid polypeptide reads, in one-letter code: Ribosome maturation factor RimM (179 aa).

The PRC barrel domain maps to 102–173 (PEEYHYRDLI…ALHVQPPPGL (72 aa)).

Belongs to the RimM family. Binds ribosomal protein uS19.

It localises to the cytoplasm. An accessory protein needed during the final step in the assembly of 30S ribosomal subunit, possibly for assembly of the head region. Essential for efficient processing of 16S rRNA. May be needed both before and after RbfA during the maturation of 16S rRNA. It has affinity for free ribosomal 30S subunits but not for 70S ribosomes. The chain is Ribosome maturation factor RimM from Synechococcus sp. (strain JA-2-3B'a(2-13)) (Cyanobacteria bacterium Yellowstone B-Prime).